The following is a 20-amino-acid chain: Mu-conotoxin SIIIB (20 aa).

A Pyrrolidone carboxylic acid modification is found at Gln-1. Disulfide bonds link Cys-3–Cys-13, Cys-4–Cys-19, and Cys-8–Cys-20. Cysteine amide is present on Cys-20.

Expressed by the venom duct.

Its subcellular location is the secreted. Mu-conotoxins block voltage-gated sodium channels (VGSC). Potently displaces (125)I-TIIIA from native rat brain Nav1.2/SCN2A (IC(50) is 5 nM) and muscle Nav1.4/SCN4A (IC(50) is 3 nM) VGSCs. Potently and irreversibly inhibits current through Xenopus oocyte-expressed Nav1.2/SCN2A and Nav1.4/SCN4A. This is Mu-conotoxin SIIIB from Conus striatus (Striated cone).